We begin with the raw amino-acid sequence, 165 residues long: Fimbrial protein (165 aa).

The first 21 residues, 1-21 (MRKSASAVAVLALIACGSAHA), serve as a signal peptide directing secretion.

The protein resides in the fimbrium. Structural subunit of the sef14 fimbriae. This chain is Fimbrial protein (sefA), found in Salmonella enteritidis.